Here is a 297-residue protein sequence, read N- to C-terminus: UDP-N-acetylglucosamine transporter TMEM241 (297 aa).

Helical transmembrane passes span 7-29 (LLGL…VLSV), 32-52 (FTYP…LLHM), 69-89 (VLIW…GSKA), 93-113 (LAVP…CGYQ), 121-141 (TSLS…CLPF), 146-166 (FDPD…SYKI), 187-207 (IFSM…FGAL), 211-231 (FLYF…GFFL), 250-270 (WILC…DMAL), and 271-291 (TKAT…LVFS).

It belongs to the nucleotide-sugar transporter family. SLC35A subfamily. In terms of tissue distribution, widely expressed with high expression in lung.

The protein localises to the golgi apparatus. Its subcellular location is the cis-Golgi network membrane. In terms of biological role, golgi-localized UDP-N-acetylglucosamine (UDP-GlcNAc) transporter that transports UDP-N-acetylglucosamine into Golgi lumen. Contributes to lysosomal targeting of NPC2, a key protein required for lysosomal cholesterol exiting, and that utilizes the mannose-6-phosphate (M6P) modification pathway for its lysosomal targeting. In Mus musculus (Mouse), this protein is UDP-N-acetylglucosamine transporter TMEM241 (Tmem241).